Consider the following 112-residue polypeptide: uncharacterized protein (112 aa).

The helical transmembrane segment at 75–95 threads the bilayer; the sequence is ILGVFGGFIYILTPLPIVSGF.

Its subcellular location is the membrane. This is an uncharacterized protein from Methanocaldococcus jannaschii (strain ATCC 43067 / DSM 2661 / JAL-1 / JCM 10045 / NBRC 100440) (Methanococcus jannaschii).